The following is a 506-amino-acid chain: 2-isopropylmalate synthase (506 aa).

Positions 4–266 constitute a Pyruvate carboxyltransferase domain; that stretch reads ILFMDTTLRD…EPSMTLKEIK (263 aa). 4 residues coordinate Mn(2+): D13, H201, H203, and N237. The tract at residues 390–506 is regulatory domain; the sequence is NITQLQVHFV…KLKSFIQLVK (117 aa).

The protein belongs to the alpha-IPM synthase/homocitrate synthase family. LeuA type 1 subfamily. Homodimer. Mn(2+) serves as cofactor.

Its subcellular location is the cytoplasm. It carries out the reaction 3-methyl-2-oxobutanoate + acetyl-CoA + H2O = (2S)-2-isopropylmalate + CoA + H(+). It functions in the pathway amino-acid biosynthesis; L-leucine biosynthesis; L-leucine from 3-methyl-2-oxobutanoate: step 1/4. In terms of biological role, catalyzes the condensation of the acetyl group of acetyl-CoA with 3-methyl-2-oxobutanoate (2-ketoisovalerate) to form 3-carboxy-3-hydroxy-4-methylpentanoate (2-isopropylmalate). This is 2-isopropylmalate synthase from Bacillus thuringiensis (strain Al Hakam).